The chain runs to 105 residues: Small ribosomal subunit protein uS10 (105 aa).

The protein belongs to the universal ribosomal protein uS10 family. In terms of assembly, part of the 30S ribosomal subunit.

In terms of biological role, involved in the binding of tRNA to the ribosomes. In Rickettsia prowazekii (strain Madrid E), this protein is Small ribosomal subunit protein uS10.